Reading from the N-terminus, the 451-residue chain is MTTSGCNPMKSSSTSNPTIGFVSLGCPKNLVDSERILTQLRMEGYNIVPSYNDADMVIVNTCGFIDSAVQESLGAIGEALNENGKVLVTGCLGAKKDEIIQVHPNVLGITGAHAYEEVLAQVHEHLPPSQTHNPFTDLVPPQGIKLTPRHYAYLKISEGCNHSCSFCIIPDMRGKLVSRPIGQVMGEAERLVKAGVKELLVISQDTSAYGVDIKHRTDFWDGRPLKTDMYQLAAALGELGVWVRLHYVYPYPHVDNVIPLMAQGKVLPYLDIPFQHASPTLLRKMRRPGQVEKTLERIKNWREQVPNLTLRSTFIVGFPGETEADFEELLGFLEEAQLDRVGCFQYSPVEGAKANELPDPVLDEIKQARYDRFMQLQQRISTERLKQKVGQTLPVLIDEVDDEGAIGRSYADAPEIDGCVYLNGDIQVKPGDIVNVQIEHSDEYDLWGTRV.

The MTTase N-terminal domain maps to 17-127 (PTIGFVSLGC…VLAQVHEHLP (111 aa)). Residues Cys26, Cys62, Cys91, Cys160, Cys164, and Cys167 each contribute to the [4Fe-4S] cluster site. The region spanning 146 to 383 (LTPRHYAYLK…MQLQQRISTE (238 aa)) is the Radical SAM core domain. The TRAM domain maps to 386–451 (KQKVGQTLPV…DEYDLWGTRV (66 aa)).

This sequence belongs to the methylthiotransferase family. RimO subfamily. [4Fe-4S] cluster serves as cofactor.

It localises to the cytoplasm. The enzyme catalyses L-aspartate(89)-[ribosomal protein uS12]-hydrogen + (sulfur carrier)-SH + AH2 + 2 S-adenosyl-L-methionine = 3-methylsulfanyl-L-aspartate(89)-[ribosomal protein uS12]-hydrogen + (sulfur carrier)-H + 5'-deoxyadenosine + L-methionine + A + S-adenosyl-L-homocysteine + 2 H(+). In terms of biological role, catalyzes the methylthiolation of an aspartic acid residue of ribosomal protein uS12. The sequence is that of Ribosomal protein uS12 methylthiotransferase RimO from Cellvibrio japonicus (strain Ueda107) (Pseudomonas fluorescens subsp. cellulosa).